Reading from the N-terminus, the 252-residue chain is MKVKVYNMDGSEKGETELSAVFETEYRPDLIKRAFLSSFTARLQPKGVDLMAGKRTSAKSIGKGHGRARVQRTGQGAGAFVPQAVGGRRCHPPKVEKILHERVNKKERLKALASAIAASANIEMVKNRGHVVETVPSVPLIVSDDFESLKKTKEVLETFKNLGLDGDVQRAKDGIKIRSGIGKLRGRKYRKPKSVLVVVSGACDAVKASKNLPGVDVISANDLGVMHIAPGADSGRLTLWTESAVEEINKRF.

Belongs to the universal ribosomal protein uL4 family. As to quaternary structure, part of the 50S ribosomal subunit.

Its function is as follows. One of the primary rRNA binding proteins, this protein initially binds near the 5'-end of the 23S rRNA. It is important during the early stages of 50S assembly. It makes multiple contacts with different domains of the 23S rRNA in the assembled 50S subunit and ribosome. In terms of biological role, forms part of the polypeptide exit tunnel. The chain is Large ribosomal subunit protein uL4 from Methanococcus aeolicus (strain ATCC BAA-1280 / DSM 17508 / OCM 812 / Nankai-3).